A 235-amino-acid polypeptide reads, in one-letter code: Histidine/lysine/arginine/ornithine transport system permease protein HisM (235 aa).

At 1 to 26 the chain is on the periplasmic side; sequence MIEIIQEYWKSLLWTDGYRFTGVAIT. Residues 23-221 enclose the ABC transmembrane type-1 domain; sequence VAITLWLLIS…LISYVLISLF (199 aa). The helical transmembrane segment at 27 to 47 threads the bilayer; it reads LWLLISSVVMGGLLAVILAVG. At 48–58 the chain is on the cytoplasmic side; the sequence is RVSSNKFIRFP. Residues 59–79 traverse the membrane as a helical segment; that stretch reads IWLFTYIFRGTPLYVQLLVFY. Topologically, residues 80–104 are periplasmic; sequence SGMYTLEIVKGTDLLNAFFRSGLNC. Residues 105 to 125 traverse the membrane as a helical segment; that stretch reads TVLALTLNTCAYTTEIFAGAI. Topologically, residues 126–157 are cytoplasmic; it reads RSVPHGEIEAARAYGFSSFKMYRCIILPSALR. A helical transmembrane segment spans residues 158-178; it reads IALPAYSNEVILMLHSTALAF. Topologically, residues 179 to 199 are periplasmic; it reads TATVPDLLKIARDINSATYQP. The helical transmembrane segment at 200–220 threads the bilayer; that stretch reads FTAFGIAAVLYLLISYVLISL. At 221-235 the chain is on the cytoplasmic side; it reads FRRAERRWLQHVSSK.

Belongs to the binding-protein-dependent transport system permease family. HisMQ subfamily. In terms of assembly, the HisPMQJ complex is composed of two ATP-binding proteins (HisP), two transmembrane proteins (HisM and HisQ) and a solute-binding protein (HisJ). The HisPMQ-ArgT complex is composed of two ATP-binding proteins (HisP), two transmembrane proteins (HisM and HisQ) and a solute-binding protein (ArgT).

Its subcellular location is the cell inner membrane. Part of the ABC transporter complex HisPMQJ involved in histidine transport. Is also part of the ABC transporter complex HisPMQ-ArgT involved in lysine/arginine/ornithine transport. Probably responsible for the translocation of the substrate across the membrane. In Salmonella typhi, this protein is Histidine/lysine/arginine/ornithine transport system permease protein HisM (hisM).